A 65-amino-acid chain; its full sequence is Hainantoxin-X.3 (65 aa).

The first 20 residues, 1 to 20 (MNMKILVLVAVLCLVVSTHA), serve as a signal peptide directing secretion. The propeptide occupies 21 to 37 (ERHSKTDMGDSPMIQER). Disulfide bonds link Cys39-Cys56, Cys46-Cys59, and Cys55-Cys64.

This sequence belongs to the neurotoxin 36 family. 02 subfamily. As to expression, expressed by the venom gland.

Its subcellular location is the secreted. In terms of biological role, reversibly blocks N-type calcium channels (Cav2.2/CACNA1B) in rat dorsal root ganglion cells. Elicits no toxic symptoms in either vertebrates or invertebrates during a period of 48 hours post-injection, when it was assayed in vivo by direct injection into mice and cockroaches. The polypeptide is Hainantoxin-X.3 (Cyriopagopus hainanus (Chinese bird spider)).